The primary structure comprises 917 residues: Hexokinase-2 (917 aa).

Residue Met-1 is modified to N-acetylmethionine. Residues Met-1–Gln-16 form a mitochondrial-binding peptide (MBP) region. 2 Hexokinase domains span residues Gln-16 to Ala-458 and Ala-464 to Ala-906. ATP-binding positions include Arg-30 and Asp-84–Asn-89. The tract at residues Asp-73–Val-207 is hexokinase small subdomain 1. D-glucose 6-phosphate is bound at residue Asp-84 to Thr-88. Residues Ser-155–Phe-156, Thr-172–Lys-173, and Asn-208–Asp-209 contribute to the D-glucose site. Positions Asn-208–Asp-447 are hexokinase large subdomain 1. D-glucose 6-phosphate is bound by residues Asp-209 and Thr-232. D-glucose-binding positions include Asn-235, Glu-260, and Gln-291–Glu-294. Asp-413 to Ser-415 serves as a coordination point for D-glucose 6-phosphate. An ATP-binding site is contributed by Lys-425–Arg-426. Residues Ser-449 and Asp-532–Thr-536 contribute to the D-glucose 6-phosphate site. The interval Asp-521 to Val-655 is hexokinase small subdomain 2. Residue Asp-532 to Asn-537 coordinates ATP. Residues Ser-603–Phe-604, Thr-620–Lys-621, and Asn-656–Asp-657 each bind D-glucose. Residues Asn-656–Asp-895 form a hexokinase large subdomain 2 region. D-glucose 6-phosphate-binding residues include Asp-657 and Thr-680. Thr-680 is a binding site for ATP. Residues Ser-682–Asn-683, Glu-708, and Gln-739–Glu-742 contribute to the D-glucose site. Residues Gly-747–Met-748, Thr-784–Ser-788, and Thr-863–Leu-867 each bind ATP. Residues Asp-861–Thr-863 and Ser-897 contribute to the D-glucose 6-phosphate site.

The protein belongs to the hexokinase family. As to quaternary structure, monomer. Interacts with TIGAR; the interaction increases hexokinase activity in a hypoxia- and HIF1A-dependent manner.

The protein resides in the mitochondrion outer membrane. The protein localises to the cytoplasm. It localises to the cytosol. The catalysed reaction is a D-hexose + ATP = a D-hexose 6-phosphate + ADP + H(+). It catalyses the reaction D-fructose + ATP = D-fructose 6-phosphate + ADP + H(+). The enzyme catalyses D-glucose + ATP = D-glucose 6-phosphate + ADP + H(+). Its pathway is carbohydrate metabolism; hexose metabolism. The protein operates within carbohydrate degradation; glycolysis; D-glyceraldehyde 3-phosphate and glycerone phosphate from D-glucose: step 1/4. Its activity is regulated as follows. Hexokinase activity is specifically inhibited by 2,6-disubstituted glucosamines. Its function is as follows. Catalyzes the phosphorylation of hexose, such as D-glucose and D-fructose, to hexose 6-phosphate (D-glucose 6-phosphate and D-fructose 6-phosphate, respectively). Mediates the initial step of glycolysis by catalyzing phosphorylation of D-glucose to D-glucose 6-phosphate. Plays a key role in maintaining the integrity of the outer mitochondrial membrane by preventing the release of apoptogenic molecules from the intermembrane space and subsequent apoptosis. The protein is Hexokinase-2 of Rattus norvegicus (Rat).